The following is a 1086-amino-acid chain: WD repeat-containing protein 64 (1086 aa).

WD repeat units lie at residues 129–168 (RRRD…WITG), 170–199 (DYLG…SSQE), 321–360 (AMPR…KPVG), 364–403 (GHMF…VLQV), 411–448 (PGDM…QDTK), 453–492 (THER…QIYQ), 498–537 (GLSI…EMKM), 560–602 (QVKQ…PYLQ), and 642–683 (IVDV…VKEI). Residues 724–749 (ICSSTQCDSSKGPQSSKGSKQSIHDA) form a disordered region. Positions 732–744 (SSKGPQSSKGSKQ) are enriched in low complexity. WD repeat units lie at residues 765–806 (ASRK…KDML), 809–850 (TKHS…DPPH), and 863–902 (AHSL…YCGY). The tract at residues 1047 to 1069 (DKVKREEAPEMTEGSRRKSLKRN) is disordered. The span at 1049-1062 (VKREEAPEMTEGSR) shows a compositional bias: basic and acidic residues.

The protein is WD repeat-containing protein 64 (Wdr64) of Mus musculus (Mouse).